The chain runs to 358 residues: Protein-arginine kinase (358 aa).

The Phosphagen kinase C-terminal domain maps to 24-255 (IVLSSRIRLA…KQLIRQERVA (232 aa)). ATP contacts are provided by residues 27 to 31 (SSRIR), His92, Arg126, 177 to 181 (RASVM), and 208 to 213 (RGIYGE). The RDXXRA motif of the pArg binding pocket involved in allosteric regulation motif lies at 338 to 343 (RDERRA).

The protein belongs to the ATP:guanido phosphotransferase family.

It catalyses the reaction L-arginyl-[protein] + ATP = N(omega)-phospho-L-arginyl-[protein] + ADP + H(+). Appears to be allosterically activated by the binding of pArg-containing polypeptides to the pArg-binding pocket localized in the C-terminal domain of McsB. Catalyzes the specific phosphorylation of arginine residues in a large number of proteins. Is part of the bacterial stress response system. Protein arginine phosphorylation has a physiologically important role and is involved in the regulation of many critical cellular processes, such as protein homeostasis, motility, competence, and stringent and stress responses, by regulating gene expression and protein activity. The sequence is that of Protein-arginine kinase from Shouchella clausii (strain KSM-K16) (Alkalihalobacillus clausii).